The primary structure comprises 153 residues: 3-hydroxyacyl-[acyl-carrier-protein] dehydratase FabZ (153 aa).

The active site involves His54.

The protein belongs to the thioester dehydratase family. FabZ subfamily.

The protein resides in the cytoplasm. The enzyme catalyses a (3R)-hydroxyacyl-[ACP] = a (2E)-enoyl-[ACP] + H2O. Functionally, involved in unsaturated fatty acids biosynthesis. Catalyzes the dehydration of short chain beta-hydroxyacyl-ACPs and long chain saturated and unsaturated beta-hydroxyacyl-ACPs. This chain is 3-hydroxyacyl-[acyl-carrier-protein] dehydratase FabZ, found in Shewanella sediminis (strain HAW-EB3).